The sequence spans 872 residues: Dynein regulatory complex subunit 7 (872 aa).

Disordered stretches follow at residues 1–40 (MEVL…REET), 231–281 (ESVK…QEEA), and 385–410 (EEED…KSFD). Residues 1–64 (MEVLKEKVEE…SEIEVSVPEK (64 aa)) are a coiled coil. 3 stretches are compositionally biased toward basic and acidic residues: residues 16 to 40 (REEA…REET), 231 to 240 (ESVKEEEKAP), and 248 to 281 (PPRD…QEEA). Positions 254–292 (SRFEQEQEMKRQEAIKAEEENRRKQEEARLLEQENAKTD) form a coiled coil. Residues 385–398 (EEEDEGMNDDDDVE) are compositionally biased toward acidic residues. Residues 399–409 (NLGKEDEDKSF) show a composition bias toward basic and acidic residues. Coiled coils occupy residues 676–706 (LKNE…EEEE) and 780–805 (QRLI…KKQQ).

It belongs to the DRC7 family. Component of the nexin-dynein regulatory complex (N-DRC). Interacts with TCTE1/DRC5. Interacts with DRC3 and GAS8/DRC4.

It is found in the cell projection. The protein resides in the cilium. Its subcellular location is the flagellum. The protein localises to the cytoplasm. It localises to the cytoskeleton. It is found in the cilium axoneme. The protein resides in the flagellum axoneme. Component of the nexin-dynein regulatory complex (N-DRC) a key regulator of ciliary/flagellar motility which maintains the alignment and integrity of the distal axoneme and regulates microtubule sliding in motile axonemes. Involved in the regulation of flagellar motility. Essential for male fertility, sperm head morphogenesis and sperm flagellum formation. This Bos taurus (Bovine) protein is Dynein regulatory complex subunit 7 (DRC7).